The chain runs to 345 residues: Cell division control protein 2 homolog 2 (345 aa).

The segment at M1 to D44 is disordered. The region spanning Y46–F328 is the Protein kinase domain. ATP contacts are provided by residues V52–V60 and K75. Position 56 is a phosphoserine (S56). Y57 is modified (phosphotyrosine). The active-site Proton acceptor is D168.

It belongs to the protein kinase superfamily. CMGC Ser/Thr protein kinase family. CDC2/CDKX subfamily. In terms of assembly, forms a stable but non-covalent complex with a regulatory subunit and with a cyclin.

It carries out the reaction L-seryl-[protein] + ATP = O-phospho-L-seryl-[protein] + ADP + H(+). It catalyses the reaction L-threonyl-[protein] + ATP = O-phospho-L-threonyl-[protein] + ADP + H(+). With respect to regulation, phosphorylation at Ser-56 or Tyr-57 inactivates the enzyme. Its function is as follows. Probably involved in the control of the cell cycle. This Trypanosoma brucei brucei protein is Cell division control protein 2 homolog 2 (CRK2).